The primary structure comprises 340 residues: Cytoskeleton protein RodZ (340 aa).

The Cytoplasmic segment spans residues 1-111 (MNTEATQEKS…LGKQRKKRDG (111 aa)). In terms of domain architecture, HTH cro/C1-type spans 19-79 (LRTAREQMGL…RLVHVPEEEL (61 aa)). The segment at residues 30-49 (QQNVAERLCLKLSTIRDIEE) is a DNA-binding region (H-T-H motif). The chain crosses the membrane as a helical; Signal-anchor for type II membrane protein span at residues 112–132 (WLMIFTWLVLFVVLGLTGAWW). Topologically, residues 133 to 340 (WQNHKAAQDD…QVARLTVGAP (208 aa)) are periplasmic. The interval 162-252 (ALSDDNANGG…AAPLPTGSAA (91 aa)) is disordered. Over residues 183-201 (ATANNAPSSVTATSDNGTP) the composition is skewed to polar residues. Residues 202–233 (AATAQSSQVTASNAAPAANAVNDNTPPVAVAP) show a composition bias toward low complexity.

Belongs to the RodZ family.

The protein localises to the cell inner membrane. Cytoskeletal protein that is involved in cell-shape control through regulation of the length of the long axis. In Erwinia tasmaniensis (strain DSM 17950 / CFBP 7177 / CIP 109463 / NCPPB 4357 / Et1/99), this protein is Cytoskeleton protein RodZ.